The chain runs to 351 residues: Histidinol-phosphate aminotransferase (351 aa).

Residue Lys221 is modified to N6-(pyridoxal phosphate)lysine.

The protein belongs to the class-II pyridoxal-phosphate-dependent aminotransferase family. Histidinol-phosphate aminotransferase subfamily. As to quaternary structure, homodimer. It depends on pyridoxal 5'-phosphate as a cofactor.

The catalysed reaction is L-histidinol phosphate + 2-oxoglutarate = 3-(imidazol-4-yl)-2-oxopropyl phosphate + L-glutamate. It functions in the pathway amino-acid biosynthesis; L-histidine biosynthesis; L-histidine from 5-phospho-alpha-D-ribose 1-diphosphate: step 7/9. The polypeptide is Histidinol-phosphate aminotransferase (Staphylococcus epidermidis (strain ATCC 12228 / FDA PCI 1200)).